Consider the following 209-residue polypeptide: Large ribosomal subunit protein uL3 (209 aa).

Residues 133-152 (THGNSLSHRVPGSIGQNQTP) are disordered. The residue at position 150 (glutamine 150) is an N5-methylglutamine.

The protein belongs to the universal ribosomal protein uL3 family. In terms of assembly, part of the 50S ribosomal subunit. Forms a cluster with proteins L14 and L19. Post-translationally, methylated by PrmB.

Functionally, one of the primary rRNA binding proteins, it binds directly near the 3'-end of the 23S rRNA, where it nucleates assembly of the 50S subunit. This Sodalis glossinidius (strain morsitans) protein is Large ribosomal subunit protein uL3.